The sequence spans 240 residues: Orotidine 5'-phosphate decarboxylase (240 aa).

Substrate is bound by residues Asp-10, Lys-33, 60–69 (DLKLHDIPNT), Thr-123, Arg-185, Gln-194, Gly-214, and Arg-215. The Proton donor role is filled by Lys-62.

Belongs to the OMP decarboxylase family. Type 1 subfamily. As to quaternary structure, homodimer.

The enzyme catalyses orotidine 5'-phosphate + H(+) = UMP + CO2. The protein operates within pyrimidine metabolism; UMP biosynthesis via de novo pathway; UMP from orotate: step 2/2. In terms of biological role, catalyzes the decarboxylation of orotidine 5'-monophosphate (OMP) to uridine 5'-monophosphate (UMP). This Lactobacillus delbrueckii subsp. bulgaricus (strain ATCC 11842 / DSM 20081 / BCRC 10696 / JCM 1002 / NBRC 13953 / NCIMB 11778 / NCTC 12712 / WDCM 00102 / Lb 14) protein is Orotidine 5'-phosphate decarboxylase.